Reading from the N-terminus, the 252-residue chain is Probable transcriptional regulatory protein Bcav_1989 (252 aa).

It belongs to the TACO1 family.

The protein localises to the cytoplasm. This Beutenbergia cavernae (strain ATCC BAA-8 / DSM 12333 / CCUG 43141 / JCM 11478 / NBRC 16432 / NCIMB 13614 / HKI 0122) protein is Probable transcriptional regulatory protein Bcav_1989.